We begin with the raw amino-acid sequence, 123 residues long: Alpha-lactalbumin (123 aa).

The region spanning 1 to 123 (KQFTKCELSQ…KLEQWLCEEL (123 aa)) is the C-type lysozyme domain. Cystine bridges form between C6-C120, C28-C111, C61-C77, and C73-C91. Ca(2+) is bound by residues K79, D82, D84, D87, and D88.

The protein belongs to the glycosyl hydrolase 22 family. As to quaternary structure, lactose synthase (LS) is a heterodimer of a catalytic component, beta1,4-galactosyltransferase (beta4Gal-T1) and a regulatory component, alpha-lactalbumin (LA). In terms of tissue distribution, mammary gland specific. Secreted in milk.

It is found in the secreted. Functionally, regulatory subunit of lactose synthase, changes the substrate specificity of galactosyltransferase in the mammary gland making glucose a good acceptor substrate for this enzyme. This enables LS to synthesize lactose, the major carbohydrate component of milk. In other tissues, galactosyltransferase transfers galactose onto the N-acetylglucosamine of the oligosaccharide chains in glycoproteins. The protein is Alpha-lactalbumin (LALBA) of Equus asinus (Donkey).